The primary structure comprises 259 residues: Ribosomal RNA small subunit methyltransferase A (259 aa).

Residues asparagine 13, leucine 15, glycine 39, glutamate 60, aspartate 84, and asparagine 101 each coordinate S-adenosyl-L-methionine.

The protein belongs to the class I-like SAM-binding methyltransferase superfamily. rRNA adenine N(6)-methyltransferase family. RsmA subfamily.

The protein localises to the cytoplasm. The catalysed reaction is adenosine(1518)/adenosine(1519) in 16S rRNA + 4 S-adenosyl-L-methionine = N(6)-dimethyladenosine(1518)/N(6)-dimethyladenosine(1519) in 16S rRNA + 4 S-adenosyl-L-homocysteine + 4 H(+). In terms of biological role, specifically dimethylates two adjacent adenosines (A1518 and A1519) in the loop of a conserved hairpin near the 3'-end of 16S rRNA in the 30S particle. May play a critical role in biogenesis of 30S subunits. In Mesomycoplasma hyopneumoniae (strain 232) (Mycoplasma hyopneumoniae), this protein is Ribosomal RNA small subunit methyltransferase A.